We begin with the raw amino-acid sequence, 450 residues long: UDP-N-acetylmuramoylalanine--D-glutamate ligase (450 aa).

112–118 (GSNGKTT) serves as a coordination point for ATP.

The protein belongs to the MurCDEF family.

It localises to the cytoplasm. The catalysed reaction is UDP-N-acetyl-alpha-D-muramoyl-L-alanine + D-glutamate + ATP = UDP-N-acetyl-alpha-D-muramoyl-L-alanyl-D-glutamate + ADP + phosphate + H(+). The protein operates within cell wall biogenesis; peptidoglycan biosynthesis. In terms of biological role, cell wall formation. Catalyzes the addition of glutamate to the nucleotide precursor UDP-N-acetylmuramoyl-L-alanine (UMA). The sequence is that of UDP-N-acetylmuramoylalanine--D-glutamate ligase from Cytophaga hutchinsonii (strain ATCC 33406 / DSM 1761 / CIP 103989 / NBRC 15051 / NCIMB 9469 / D465).